Reading from the N-terminus, the 385-residue chain is 1-deoxy-D-xylulose 5-phosphate reductoisomerase (385 aa).

Residues Ser10, Gly11, Ser12, Ile13, Gly36, Asn38, and Asn124 each contribute to the NADPH site. Lys125 is a 1-deoxy-D-xylulose 5-phosphate binding site. Glu126 serves as a coordination point for NADPH. Residue Asp150 participates in Mn(2+) binding. Ser151, Glu152, Ser176, and His198 together coordinate 1-deoxy-D-xylulose 5-phosphate. Residue Glu152 participates in Mn(2+) binding. Gly204 contributes to the NADPH binding site. 4 residues coordinate 1-deoxy-D-xylulose 5-phosphate: Ser211, Asn216, Lys217, and Glu220. A Mn(2+)-binding site is contributed by Glu220.

This sequence belongs to the DXR family. Requires Mg(2+) as cofactor. The cofactor is Mn(2+).

It catalyses the reaction 2-C-methyl-D-erythritol 4-phosphate + NADP(+) = 1-deoxy-D-xylulose 5-phosphate + NADPH + H(+). Its pathway is isoprenoid biosynthesis; isopentenyl diphosphate biosynthesis via DXP pathway; isopentenyl diphosphate from 1-deoxy-D-xylulose 5-phosphate: step 1/6. In terms of biological role, catalyzes the NADPH-dependent rearrangement and reduction of 1-deoxy-D-xylulose-5-phosphate (DXP) to 2-C-methyl-D-erythritol 4-phosphate (MEP). The sequence is that of 1-deoxy-D-xylulose 5-phosphate reductoisomerase from Endomicrobium trichonymphae.